The sequence spans 392 residues: L-lactate dehydrogenase (392 aa).

In terms of domain architecture, FMN hydroxy acid dehydrogenase spans 1 to 380 (MIISASTDYR…GSDSLVTGSA (380 aa)). Residue Y24 participates in substrate binding. FMN contacts are provided by S106 and Q127. A substrate-binding site is contributed by Y129. Residue T155 participates in FMN binding. Substrate is bound at residue R164. K251 contacts FMN. Residue H275 is the Proton acceptor of the active site. R278 serves as a coordination point for substrate. 306 to 330 (DSGVRNGLDVVRMIAMGADTILLGR) lines the FMN pocket.

It belongs to the FMN-dependent alpha-hydroxy acid dehydrogenase family. FMN serves as cofactor.

Its subcellular location is the cell inner membrane. It catalyses the reaction (S)-lactate + A = pyruvate + AH2. In terms of biological role, catalyzes the conversion of L-lactate to pyruvate. Is coupled to the respiratory chain. This Chromohalobacter salexigens (strain ATCC BAA-138 / DSM 3043 / CIP 106854 / NCIMB 13768 / 1H11) protein is L-lactate dehydrogenase.